We begin with the raw amino-acid sequence, 230 residues long: Uracil-DNA glycosylase (230 aa).

The active-site Proton acceptor is Asp-70.

Belongs to the uracil-DNA glycosylase (UDG) superfamily. UNG family.

Its subcellular location is the cytoplasm. It carries out the reaction Hydrolyzes single-stranded DNA or mismatched double-stranded DNA and polynucleotides, releasing free uracil.. Its function is as follows. Excises uracil residues from the DNA which can arise as a result of misincorporation of dUMP residues by DNA polymerase or due to deamination of cytosine. The sequence is that of Uracil-DNA glycosylase from Pseudomonas entomophila (strain L48).